The chain runs to 419 residues: Fusaric acid cluster transcription factor FUB10 (419 aa).

A DNA-binding region (zn(2)-C6 fungal-type) is located at residues Cys-16–Cys-47. The tract at residues Ser-50–Met-92 is disordered. The segment covering Thr-74 to Ser-86 has biased composition (low complexity).

The protein resides in the nucleus. Functionally, transcription factor that regulates the expression of the gene cluster that mediates the biosynthesis of fusaric acid, a mycotoxin with low to moderate toxicity to animals and humans, but with high phytotoxic properties. This is Fusaric acid cluster transcription factor FUB10 from Gibberella fujikuroi (strain CBS 195.34 / IMI 58289 / NRRL A-6831) (Bakanae and foot rot disease fungus).